Here is a 658-residue protein sequence, read N- to C-terminus: Glycogen debranching enzyme (658 aa).

The active-site Nucleophile is the Asp336. The active-site Proton donor is the Glu371. Residues 459-484 (EANGEENRDGTNSNYSDNHGKEGLGG) are disordered.

It belongs to the glycosyl hydrolase 13 family.

The catalysed reaction is Hydrolysis of (1-&gt;6)-alpha-D-glucosidic linkages to branches with degrees of polymerization of three or four glucose residues in limit dextrin.. It functions in the pathway glycan degradation; glycogen degradation. Removes maltotriose and maltotetraose chains that are attached by 1,6-alpha-linkage to the limit dextrin main chain, generating a debranched limit dextrin. The chain is Glycogen debranching enzyme from Salmonella dublin (strain CT_02021853).